Consider the following 82-residue polypeptide: Vejovine (82 aa).

A signal peptide spans 1–22 (MNAKTLFVVFLIGMLVTEQVEA). A propeptide spanning residues 70–82 (MTLDEIVDAMYYD) is cleaved from the precursor.

This sequence belongs to the non-disulfide-bridged peptide (NDBP) superfamily. Long chain multifunctional peptide (group 2) family. Expressed by the venom gland.

The protein resides in the secreted. It is found in the target cell membrane. Functionally, displays significant potent antimicrobial activity against clinical isolates of Gram-negative multidrug resistant strains of E.coli, P.aeruginosa and A.baumanii with MIC values as low as 4.4 uM. Additionally, it displays low cytolytic and hemolytic activity against human erythrocytes reaching 50% hemolysis at 100 uM. The polypeptide is Vejovine (Vaejovis mexicanus (Mexican scorpion)).